The sequence spans 416 residues: Gamma-glutamyl phosphate reductase (416 aa).

It belongs to the gamma-glutamyl phosphate reductase family.

It is found in the cytoplasm. The catalysed reaction is L-glutamate 5-semialdehyde + phosphate + NADP(+) = L-glutamyl 5-phosphate + NADPH + H(+). It functions in the pathway amino-acid biosynthesis; L-proline biosynthesis; L-glutamate 5-semialdehyde from L-glutamate: step 2/2. Functionally, catalyzes the NADPH-dependent reduction of L-glutamate 5-phosphate into L-glutamate 5-semialdehyde and phosphate. The product spontaneously undergoes cyclization to form 1-pyrroline-5-carboxylate. This is Gamma-glutamyl phosphate reductase from Salmonella heidelberg (strain SL476).